A 96-amino-acid polypeptide reads, in one-letter code: Co-chaperonin GroES (96 aa).

This sequence belongs to the GroES chaperonin family. As to quaternary structure, heptamer of 7 subunits arranged in a ring. Interacts with the chaperonin GroEL.

It localises to the cytoplasm. Functionally, together with the chaperonin GroEL, plays an essential role in assisting protein folding. The GroEL-GroES system forms a nano-cage that allows encapsulation of the non-native substrate proteins and provides a physical environment optimized to promote and accelerate protein folding. GroES binds to the apical surface of the GroEL ring, thereby capping the opening of the GroEL channel. The protein is Co-chaperonin GroES of Caulobacter vibrioides (strain ATCC 19089 / CIP 103742 / CB 15) (Caulobacter crescentus).